A 338-amino-acid chain; its full sequence is LIX1-like protein (338 aa).

Residues 1-65 (METMRAQRLQ…LLLAGAPGLP (65 aa)) are disordered. The span at 29–38 (TGAPTSAATP) shows a compositional bias: low complexity. A compositionally biased stretch (pro residues) spans 39–56 (PAGPPPAPPPPAPPPPPL).

Belongs to the LIX1 family.

The polypeptide is LIX1-like protein (Lix1l) (Rattus norvegicus (Rat)).